The primary structure comprises 623 residues: MSKVIGIDLGTTNSCVAVYERGESKVIPNKEGKNTTPSVVAFTDKGEVLVGDSAKRQAVTNPEKTIYSIKRIMGLMINEDAAKEAKTRLPYHITERNGACAIEIAGKIYTPQEISAKVLMKLKEDAEAFLGESVVDAVITVPAYFNDAQRKATKEAGTIAGLNVLRIINEPTSAALAYGLDKKDSEKIVVYDLGGGTFDVTVLETGDNVVEVLATGGNAFLGGDDFDNKLIDFLANEFKDETGIDLKNDVMALQRLKEAAENAKKELSSANETEINLPFITADASGPKHLVKKLTRAKFEGMIDSLVAETITKINEVVSDAGLKKDEIKEVVMVGGSTRVPLVQEEVKKTFNKDLNKSVNPDEVVAIGAAIQGAVIKGDVKDVLLLDVTPLSLGIETLGGVMTKIIEKGTTIPTKKEQVFSTAEDNQSAVTINVLQGEREFSRDNKSLGNFNLEGIPPAPRGMPQIEVTFDIDANGILTVSAKDKATGKAQEIKITGSSGLSEEEINNMVKDAELHKEEDKKRKEAVDVRNAADSLAHQVEKSLSELGEKVATADKENIQKALDDLRETLKNQNASKEEIESKMKALSEVSHKLAENMYKKDEPNTANDKKKKDDDVIDAEVE.

Position 197 is a phosphothreonine; by autocatalysis (Thr-197). Residues 595–615 (AENMYKKDEPNTANDKKKKDD) are compositionally biased toward basic and acidic residues. The segment at 595–623 (AENMYKKDEPNTANDKKKKDDDVIDAEVE) is disordered.

It belongs to the heat shock protein 70 family.

Acts as a chaperone. This is Chaperone protein DnaK from Campylobacter jejuni subsp. doylei (strain ATCC BAA-1458 / RM4099 / 269.97).